Consider the following 184-residue polypeptide: uncharacterized protein (184 aa).

This sequence belongs to the TorD/DmsD family.

This is an uncharacterized protein from Haemophilus influenzae (strain ATCC 51907 / DSM 11121 / KW20 / Rd).